We begin with the raw amino-acid sequence, 145 residues long: 3-dehydroquinate dehydratase (145 aa).

Residue Y23 is the Proton acceptor of the active site. Residues N74, H80, and D87 each contribute to the substrate site. Residue H100 is the Proton donor of the active site. Residues 101-102 (LS) and R111 each bind substrate.

This sequence belongs to the type-II 3-dehydroquinase family. Homododecamer.

It catalyses the reaction 3-dehydroquinate = 3-dehydroshikimate + H2O. It functions in the pathway metabolic intermediate biosynthesis; chorismate biosynthesis; chorismate from D-erythrose 4-phosphate and phosphoenolpyruvate: step 3/7. Catalyzes a trans-dehydration via an enolate intermediate. This Halalkalibacterium halodurans (strain ATCC BAA-125 / DSM 18197 / FERM 7344 / JCM 9153 / C-125) (Bacillus halodurans) protein is 3-dehydroquinate dehydratase.